Here is a 453-residue protein sequence, read N- to C-terminus: MSPVSHVAVLAFPFGTHAAPLLTLVNRLAASAPDIIFSFFSTSSSITTIFSPTNLISIGSNIKPYAVWDGSPEGFVFSGNPREPIEYFLNAAPDNFDKAMKKAVEDTGVNISCLLTDAFLWFAADFSEKIGVPWIPVWTAASCSLCLHVYTDEIRSRFAEFDIAEKAEKTIDFIPGLSAISFSDLPEELIMEDSQSIFALTLHNMGLKLHKATAVAVNSFEEIDPIITNHLRSTNQLNILNIGPLQTLSSSIPPEDNECLKWLQTQKESSVVYLSFGTVINPPPNEMAALASTLESRKIPFLWSLRDEARKHLPENFIDRTSTFGKIVSWAPQLHVLENPAIGVFVTHCGWNSTLESIFCRVPVIGRPFFGDQKVNARMVEDVWKIGVGVKGGVFTEDETTRVLELVLFSDKGKEMRQNVGRLKEKAKDAVKANGSSTRNFESLLAAFNKLDS.

Residue H17 is the Proton acceptor of the active site. An an anthocyanidin-binding site is contributed by H17. D117 serves as the catalytic Charge relay. A UDP-alpha-D-glucose-binding site is contributed by T139. H148 lines the an anthocyanidin pocket. Residues A331, Q333, H348, W351, N352, S353, and E356 each coordinate UDP-alpha-D-glucose. Residue G371 coordinates an anthocyanidin. Residues D372 and Q373 each contribute to the UDP-alpha-D-glucose site.

It belongs to the UDP-glycosyltransferase family.

The catalysed reaction is an anthocyanidin + UDP-alpha-D-glucose + H(+) = an anthocyanidin 3-O-beta-D-glucoside + UDP. It carries out the reaction delphinidin + UDP-alpha-D-glucose = delphinidin 3-O-beta-D-glucoside + UDP. It catalyses the reaction pelargonidin + UDP-alpha-D-glucose = pelargonidin 3-O-beta-D-glucoside + UDP. The enzyme catalyses cyanidin + UDP-alpha-D-glucose = cyanidin 3-O-beta-D-glucoside + UDP + H(+). Its pathway is pigment biosynthesis; anthocyanin biosynthesis. Its function is as follows. In the presence of other necessary color factors, this glycosylation reaction allows the accumulation of anthocyanin pigments. Anthocyanidins are the preferred substrates, while flavonols are only a minor substrate in vitro. This chain is Anthocyanidin 3-O-glucosyltransferase, found in Gentiana triflora (Clustered gentian).